The chain runs to 225 residues: Cytochrome c oxidase subunit 2 (225 aa).

Over 1–25 (MSTWFMFMFQESNSYYADNLISFHN) the chain is Mitochondrial intermembrane. The helical transmembrane segment at 26-47 (MVMMIIIMISTLTVYIILDLFM) threads the bilayer. Residues 48-62 (NKFSNLFLLKNHNIE) lie on the Mitochondrial matrix side of the membrane. Residues 63 to 82 (IIWTIIPIIILLIICFPSLK) form a helical membrane-spanning segment. The Mitochondrial intermembrane segment spans residues 83–225 (ILYLIDEIVN…YFLNWVNKQI (143 aa)). Residues His-159, Cys-194, Glu-196, Cys-198, His-202, and Met-205 each coordinate Cu cation. Mg(2+) is bound at residue Glu-196.

It belongs to the cytochrome c oxidase subunit 2 family. Component of the cytochrome c oxidase (complex IV, CIV), a multisubunit enzyme composed of a catalytic core of 3 subunits and several supernumerary subunits. The complex exists as a monomer or a dimer and forms supercomplexes (SCs) in the inner mitochondrial membrane with ubiquinol-cytochrome c oxidoreductase (cytochrome b-c1 complex, complex III, CIII). Cu cation serves as cofactor.

The protein resides in the mitochondrion inner membrane. It carries out the reaction 4 Fe(II)-[cytochrome c] + O2 + 8 H(+)(in) = 4 Fe(III)-[cytochrome c] + 2 H2O + 4 H(+)(out). Its function is as follows. Component of the cytochrome c oxidase, the last enzyme in the mitochondrial electron transport chain which drives oxidative phosphorylation. The respiratory chain contains 3 multisubunit complexes succinate dehydrogenase (complex II, CII), ubiquinol-cytochrome c oxidoreductase (cytochrome b-c1 complex, complex III, CIII) and cytochrome c oxidase (complex IV, CIV), that cooperate to transfer electrons derived from NADH and succinate to molecular oxygen, creating an electrochemical gradient over the inner membrane that drives transmembrane transport and the ATP synthase. Cytochrome c oxidase is the component of the respiratory chain that catalyzes the reduction of oxygen to water. Electrons originating from reduced cytochrome c in the intermembrane space (IMS) are transferred via the dinuclear copper A center (CU(A)) of subunit 2 and heme A of subunit 1 to the active site in subunit 1, a binuclear center (BNC) formed by heme A3 and copper B (CU(B)). The BNC reduces molecular oxygen to 2 water molecules using 4 electrons from cytochrome c in the IMS and 4 protons from the mitochondrial matrix. The protein is Cytochrome c oxidase subunit 2 (COII) of Apis mellifera ligustica (Common honeybee).